The following is a 385-amino-acid chain: Glucans biosynthesis protein C (385 aa).

10 helical membrane passes run 17–37 (AWLM…SHTW), 60–80 (MQVF…RYPL), 91–111 (VGIP…IMLQ), 137–157 (ISHL…VWIF), 173–193 (KFSM…YAVI), 212–232 (FIVM…LAFI), 239–259 (LFTT…VAYL), 274–294 (TESV…FSFG), 311–331 (ASLF…AYIT), and 338–358 (WLGF…LYEI).

This sequence belongs to the acyltransferase 3 family. OpgC subfamily.

The protein resides in the cell membrane. Its pathway is glycan metabolism; osmoregulated periplasmic glucan (OPG) biosynthesis. Necessary for the succinyl substitution of periplasmic glucans. Could catalyze the transfer of succinyl residues from the cytoplasmic side of the membrane to the nascent glucan backbones on the periplasmic side of the membrane. In Shigella dysenteriae serotype 1 (strain Sd197), this protein is Glucans biosynthesis protein C.